Reading from the N-terminus, the 66-residue chain is MMFPVRCFTCGAPIGHLWEEFKKRVEAGEDPGKVLDDLGVKRYCCRRMFLSHIEISYEILNFPKVS.

Residues cysteine 7, cysteine 10, cysteine 44, and cysteine 45 each contribute to the Zn(2+) site.

Belongs to the archaeal Rpo10/eukaryotic RPB10 RNA polymerase subunit family. Part of the RNA polymerase complex. Zn(2+) is required as a cofactor.

The protein localises to the cytoplasm. The catalysed reaction is RNA(n) + a ribonucleoside 5'-triphosphate = RNA(n+1) + diphosphate. Functionally, DNA-dependent RNA polymerase (RNAP) catalyzes the transcription of DNA into RNA using the four ribonucleoside triphosphates as substrates. The polypeptide is DNA-directed RNA polymerase subunit Rpo10 (Staphylothermus marinus (strain ATCC 43588 / DSM 3639 / JCM 9404 / F1)).